Reading from the N-terminus, the 132-residue chain is Putative F-box protein At4g05620 (132 aa).

The F-box domain maps to 17–63 (QKKSLSLPHDVLVSCLAHVSRLHYSILSLVLKNFRSLIASPELYKTR).

The sequence is that of Putative F-box protein At4g05620 from Arabidopsis thaliana (Mouse-ear cress).